The following is a 34-amino-acid chain: Turripeptide OL127 (34 aa).

Contains 4 disulfide bonds. Expressed by the venom duct.

It localises to the secreted. Acts as a neurotoxin by inhibiting an ion channel. This is Turripeptide OL127 from Iotyrris olangoensis (Sea snail).